The chain runs to 204 residues: Holliday junction branch migration complex subunit RuvA (204 aa).

Residues 1–64 are domain I; that stretch reads MIGRLRGVVI…EDAQLLYGFN (64 aa). Residues 65–143 are domain II; it reads HKQERALFRE…GWVSHDLFSP (79 aa). The segment at 144–155 is flexible linker; that stretch reads AEISLPARESVL. Residues 156–204 are domain III; the sequence is RAPDSSEEAASALVALGYKPQQASQIVSKIAKEGMSVEDIIRESLRSLV.

It belongs to the RuvA family. Homotetramer. Forms an RuvA(8)-RuvB(12)-Holliday junction (HJ) complex. HJ DNA is sandwiched between 2 RuvA tetramers; dsDNA enters through RuvA and exits via RuvB. An RuvB hexamer assembles on each DNA strand where it exits the tetramer. Each RuvB hexamer is contacted by two RuvA subunits (via domain III) on 2 adjacent RuvB subunits; this complex drives branch migration. In the full resolvosome a probable DNA-RuvA(4)-RuvB(12)-RuvC(2) complex forms which resolves the HJ.

Its subcellular location is the cytoplasm. The RuvA-RuvB-RuvC complex processes Holliday junction (HJ) DNA during genetic recombination and DNA repair, while the RuvA-RuvB complex plays an important role in the rescue of blocked DNA replication forks via replication fork reversal (RFR). RuvA specifically binds to HJ cruciform DNA, conferring on it an open structure. The RuvB hexamer acts as an ATP-dependent pump, pulling dsDNA into and through the RuvAB complex. HJ branch migration allows RuvC to scan DNA until it finds its consensus sequence, where it cleaves and resolves the cruciform DNA. In Aeromonas salmonicida (strain A449), this protein is Holliday junction branch migration complex subunit RuvA.